The following is a 363-amino-acid chain: Holliday junction branch migration complex subunit RuvB (363 aa).

The interval 1–32 is disordered; the sequence is MSDVERTEFEIPGGIPPRRNGGQGRAADTNVD. Residues 27–207 are large ATPase domain (RuvB-L); it reads ADTNVDANLK…FGFTAQMEFY (181 aa). Residues leucine 46, arginine 47, glycine 88, lysine 91, threonine 92, threonine 93, 154–156, arginine 197, tyrosine 207, and arginine 244 each bind ATP; that span reads EDF. A Mg(2+)-binding site is contributed by threonine 92. The interval 208–278 is small ATPAse domain (RuvB-S); it reads DVPDLTKVVK…AANAALIVFD (71 aa). Positions 281–363 are head domain (RuvB-H); that stretch reads EVGLDRLDRA…EPPEGTIGDY (83 aa). Positions 336 and 341 each coordinate DNA.

It belongs to the RuvB family. In terms of assembly, homohexamer. Forms an RuvA(8)-RuvB(12)-Holliday junction (HJ) complex. HJ DNA is sandwiched between 2 RuvA tetramers; dsDNA enters through RuvA and exits via RuvB. An RuvB hexamer assembles on each DNA strand where it exits the tetramer. Each RuvB hexamer is contacted by two RuvA subunits (via domain III) on 2 adjacent RuvB subunits; this complex drives branch migration. In the full resolvosome a probable DNA-RuvA(4)-RuvB(12)-RuvC(2) complex forms which resolves the HJ.

It localises to the cytoplasm. It carries out the reaction ATP + H2O = ADP + phosphate + H(+). Functionally, the RuvA-RuvB-RuvC complex processes Holliday junction (HJ) DNA during genetic recombination and DNA repair, while the RuvA-RuvB complex plays an important role in the rescue of blocked DNA replication forks via replication fork reversal (RFR). RuvA specifically binds to HJ cruciform DNA, conferring on it an open structure. The RuvB hexamer acts as an ATP-dependent pump, pulling dsDNA into and through the RuvAB complex. RuvB forms 2 homohexamers on either side of HJ DNA bound by 1 or 2 RuvA tetramers; 4 subunits per hexamer contact DNA at a time. Coordinated motions by a converter formed by DNA-disengaged RuvB subunits stimulates ATP hydrolysis and nucleotide exchange. Immobilization of the converter enables RuvB to convert the ATP-contained energy into a lever motion, pulling 2 nucleotides of DNA out of the RuvA tetramer per ATP hydrolyzed, thus driving DNA branch migration. The RuvB motors rotate together with the DNA substrate, which together with the progressing nucleotide cycle form the mechanistic basis for DNA recombination by continuous HJ branch migration. Branch migration allows RuvC to scan DNA until it finds its consensus sequence, where it cleaves and resolves cruciform DNA. In Corynebacterium glutamicum (strain R), this protein is Holliday junction branch migration complex subunit RuvB.